Reading from the N-terminus, the 162-residue chain is Interleukin-15 (162 aa).

A signal peptide spans 1–29 (MRILKPYLRSTSIQCYLCLLLNSHFLTEA). Positions 30–48 (GIHVFILGCISAGLPKTEA) are excised as a propeptide. 2 cysteine pairs are disulfide-bonded: Cys83–Cys133 and Cys90–Cys136. 3 N-linked (GlcNAc...) asparagine glycosylation sites follow: Asn113, Asn121, and Asn127.

The protein belongs to the IL-15/IL-21 family.

The protein localises to the secreted. Functionally, cytokine that plays a major role in the development of inflammatory and protective immune responses to microbial invaders and parasites by modulating immune cells of both the innate and adaptive immune systems. Stimulates the proliferation of natural killer cells, T-cells and B-cells and promotes the secretion of several cytokines. In monocytes, induces the production of IL8 and monocyte chemotactic protein 1/CCL2, two chemokines that attract neutrophils and monocytes respectively to sites of infection. Unlike most cytokines, which are secreted in soluble form, IL15 is expressed in association with its high affinity IL15RA on the surface of IL15-producing cells and delivers signals to target cells that express IL2RB and IL2RG receptor subunits. Binding to its receptor triggers the phosphorylation of JAK1 and JAK3 and the recruitment and subsequent phosphorylation of signal transducer and activator of transcription-3/STAT3 and STAT5. In mast cells, induces the rapid tyrosine phosphorylation of STAT6 and thereby controls mast cell survival and release of cytokines such as IL4. This chain is Interleukin-15 (IL15), found in Bubalus bubalis (Domestic water buffalo).